The sequence spans 827 residues: SID1 transmembrane family member 1 (827 aa).

An N-terminal signal peptide occupies residues methionine 1 to alanine 19. The Extracellular segment spans residues alanine 20–serine 309. Asparagine 57, asparagine 67, asparagine 83, asparagine 136, and asparagine 282 each carry an N-linked (GlcNAc...) asparagine glycan. The helical transmembrane segment at serine 310 to valine 330 threads the bilayer. Over histidine 331 to lysine 442 the chain is Cytoplasmic. Residues alanine 355 to methionine 408 form a disordered region. The segment covering proline 364 to glutamate 374 has biased composition (polar residues). Over residues serine 375 to aspartate 397 the composition is skewed to low complexity. Over residues serine 398 to methionine 408 the composition is skewed to acidic residues. A helical transmembrane segment spans residues isoleucine 443–valine 463. At isoleucine 464 to alanine 494 the chain is on the extracellular side. Asparagine 471 is a glycosylation site (N-linked (GlcNAc...) asparagine). A helical membrane pass occupies residues phenylalanine 495 to valine 515. The Cytoplasmic portion of the chain corresponds to leucine 516–histidine 541. The helical transmembrane segment at phenylalanine 542–tyrosine 562 threads the bilayer. Over histidine 563–glutamine 572 the chain is Extracellular. Asparagine 567 is a glycosylation site (N-linked (GlcNAc...) asparagine). A helical transmembrane segment spans residues phenylalanine 573–tyrosine 590. At glutamine 591–serine 600 the chain is on the cytoplasmic side. A helical membrane pass occupies residues alanine 601 to phenylalanine 621. Residues glycine 622–valine 626 lie on the Extracellular side of the membrane. Residues tryptophan 627–isoleucine 647 form a helical membrane-spanning segment. Over tyrosine 648–arginine 683 the chain is Cytoplasmic. The helical transmembrane segment at methionine 684–tyrosine 704 threads the bilayer. At arginine 705–alanine 710 the chain is on the extracellular side. The helical transmembrane segment at serine 711–methionine 731 threads the bilayer. The Cytoplasmic segment spans residues lysine 732 to proline 741. The chain crosses the membrane as a helical span at residues valine 742 to phenylalanine 762. The Extracellular portion of the chain corresponds to glutamine 763 to histidine 791. An N-linked (GlcNAc...) asparagine glycan is attached at asparagine 764. Residues aspartate 792–leucine 812 form a helical membrane-spanning segment. Topologically, residues aspartate 813–phenylalanine 827 are cytoplasmic.

The protein belongs to the SID1 family.

It is found in the membrane. In vitro binds long double-stranded RNA (dsRNA) (500 and 700 base pairs), but not dsRNA shorter than 300 bp. Not involved in RNA autophagy, a process in which RNA is directly imported into lysosomes in an ATP-dependent manner, and degraded. The sequence is that of SID1 transmembrane family member 1 (SIDT1) from Homo sapiens (Human).